A 496-amino-acid polypeptide reads, in one-letter code: UDP-N-acetylmuramoyl-L-alanyl-D-glutamate--2,6-diaminopimelate ligase (496 aa).

S32 contributes to the UDP-N-acetyl-alpha-D-muramoyl-L-alanyl-D-glutamate binding site. 116-122 (GTNGKTT) lines the ATP pocket. UDP-N-acetyl-alpha-D-muramoyl-L-alanyl-D-glutamate is bound by residues 158–159 (TT), S185, Q191, and R193. K225 carries the post-translational modification N6-carboxylysine. Meso-2,6-diaminopimelate contacts are provided by residues R389, 413–416 (DNPR), G464, and E468. The short motif at 413–416 (DNPR) is the Meso-diaminopimelate recognition motif element.

Belongs to the MurCDEF family. MurE subfamily. It depends on Mg(2+) as a cofactor. Carboxylation is probably crucial for Mg(2+) binding and, consequently, for the gamma-phosphate positioning of ATP.

The protein resides in the cytoplasm. The enzyme catalyses UDP-N-acetyl-alpha-D-muramoyl-L-alanyl-D-glutamate + meso-2,6-diaminopimelate + ATP = UDP-N-acetyl-alpha-D-muramoyl-L-alanyl-gamma-D-glutamyl-meso-2,6-diaminopimelate + ADP + phosphate + H(+). It participates in cell wall biogenesis; peptidoglycan biosynthesis. Functionally, catalyzes the addition of meso-diaminopimelic acid to the nucleotide precursor UDP-N-acetylmuramoyl-L-alanyl-D-glutamate (UMAG) in the biosynthesis of bacterial cell-wall peptidoglycan. This is UDP-N-acetylmuramoyl-L-alanyl-D-glutamate--2,6-diaminopimelate ligase from Nostoc sp. (strain PCC 7120 / SAG 25.82 / UTEX 2576).